We begin with the raw amino-acid sequence, 155 residues long: Deoxyuridine 5'-triphosphate nucleotidohydrolase (155 aa).

Substrate contacts are provided by residues 72–74 (RSG), Asn-85, 89–91 (TVD), and Lys-99.

Belongs to the dUTPase family. Requires Mg(2+) as cofactor.

The enzyme catalyses dUTP + H2O = dUMP + diphosphate + H(+). It participates in pyrimidine metabolism; dUMP biosynthesis; dUMP from dCTP (dUTP route): step 2/2. Its function is as follows. This enzyme is involved in nucleotide metabolism: it produces dUMP, the immediate precursor of thymidine nucleotides and it decreases the intracellular concentration of dUTP so that uracil cannot be incorporated into DNA. This Parvibaculum lavamentivorans (strain DS-1 / DSM 13023 / NCIMB 13966) protein is Deoxyuridine 5'-triphosphate nucleotidohydrolase.